Reading from the N-terminus, the 513-residue chain is Aspartic proteinase A2 (513 aa).

A signal peptide spans 1–24 (MGVYSRAVAFSVFVSFLLFFTAYS). Positions 25–71 (KRNDGTFRVGLKKLKLDPNNRLATRFGSKQEEALRSSLRSYNNNLGG) are cleaved as a propeptide — activation peptide. The 422-residue stretch at 89–510 (YYGEIAIGTP…DFGNEQVGFA (422 aa)) folds into the Peptidase A1 domain. Asp107 is an active-site residue. 2 cysteine pairs are disulfide-bonded: Cys120–Cys126 and Cys285–Cys289. Residue Asp294 is part of the active site. One can recognise a Saposin B-type domain in the interval 319–424 (VVSQQCKTVV…NEICERMPSP (106 aa)). Intrachain disulfides connect Cys324–Cys418, Cys349–Cys390, Cys355–Cys387, and Cys432–Cys469. Residue Asn404 is glycosylated (N-linked (GlcNAc...) asparagine).

This sequence belongs to the peptidase A1 family. Expressed in seed pods and dry seeds.

It is found in the vacuole. Functionally, involved in the breakdown of propeptides of storage proteins in protein-storage vacuoles. The chain is Aspartic proteinase A2 (APA2) from Arabidopsis thaliana (Mouse-ear cress).